The primary structure comprises 331 residues: FMRFamide-related neuropeptides (331 aa).

The signal sequence occupies residues 1-25; it reads MRCWSPCSLLVVIVIYCLSSHTSEA. Residues 26-65 constitute a propeptide that is removed on maturation; sequence FDLAQACVESQRLSLLPICDTIFAVQQEGVQQSADDGMRS. A phenylalanine amide mark is found at Phe71 and Phe83. The propeptide occupies 86 to 94; sequence NVPDLPFED. Phe100 is subject to Phenylalanine amide. Positions 103–168 are excised as a propeptide; the sequence is AAPQLDELLK…YIDDVEDSDV (66 aa). Positions 122 to 158 are disordered; it reads QKADETSVRRKRSTDAAPQNNAENPEQKNDSAKITKR. A compositionally biased stretch (basic and acidic residues) spans 146–158; the sequence is PEQKNDSAKITKR. A phenylalanine amide mark is found at Phe174 and Phe181. Positions 184–194 are excised as a propeptide; sequence NPSDVGNKLTE. Residue Phe200 is modified to Phenylalanine amide. Positions 203 to 205 are excised as a propeptide; the sequence is DPE. Phe211 carries the post-translational modification Phenylalanine amide. Residues 214–216 constitute a propeptide that is removed on maturation; the sequence is SDD. The residue at position 222 (Phe222) is a Phenylalanine amide. A propeptide spanning residues 225–236 is cleaved from the precursor; that stretch reads NPSDAEDELEED. At Phe242 the chain carries Phenylalanine amide. A propeptide spanning residues 245–254 is cleaved from the precursor; the sequence is GGEDDEEEAE. Residue Phe260 is modified to Phenylalanine amide. Residues 263–265 constitute a propeptide that is removed on maturation; the sequence is DPE. Position 271 is a phenylalanine amide (Phe271). Residues 274-277 constitute a propeptide that is removed on maturation; sequence SGED. Residues 279–296 are compositionally biased toward basic and acidic residues; it reads RFMRFGRNPDEQEADKRF. Positions 279 to 310 are disordered; it reads RFMRFGRNPDEQEADKRFMRFGRGGEDDEVST. At Phe283 the chain carries Phenylalanine amide. A propeptide spanning residues 286 to 293 is cleaved from the precursor; it reads NPDEQEAD. Phe299 bears the Phenylalanine amide mark. The propeptide occupies 302 to 312; that stretch reads GGEDDEVSTED. Position 318 is a phenylalanine amide (Phe318). Residues 321 to 331 constitute a propeptide that is removed on maturation; sequence SADKCKGCLEG.

Belongs to the FARP (FMRFamide related peptide) family.

It is found in the secreted. Its function is as follows. Excitatory neurotransmitters that directly modulate chromatophore function by activating chromatophore expansion at the chromatophore neuromuscular junction. The sequence is that of FMRFamide-related neuropeptides from Doryteuthis opalescens (California market squid).